Here is a 323-residue protein sequence, read N- to C-terminus: Acetyl esterase (323 aa).

The Involved in the stabilization of the negatively charged intermediate by the formation of the oxyanion hole signature appears at 91–93 (HGG). Residues serine 165, aspartate 262, and histidine 292 contribute to the active site.

Belongs to the 'GDXG' lipolytic enzyme family. In terms of assembly, homodimer. Interacts with MalT and MelA.

It is found in the cytoplasm. Functionally, displays esterase activity towards short chain fatty esters (acyl chain length of up to 8 carbons). Able to hydrolyze triacetylglycerol (triacetin) and tributyrylglycerol (tributyrin), but not trioleylglycerol (triolein) or cholesterol oleate. Negatively regulates MalT activity by antagonizing maltotriose binding. Inhibits MelA galactosidase activity. This is Acetyl esterase from Salmonella schwarzengrund (strain CVM19633).